The chain runs to 366 residues: Heat-inducible transcription repressor HrcA (366 aa).

Residues Ser298–Ala309 are compositionally biased toward polar residues. Residues Ser298–Thr318 form a disordered region.

Belongs to the HrcA family.

Its function is as follows. Negative regulator of class I heat shock genes (grpE-dnaK-dnaJ and groELS operons). Prevents heat-shock induction of these operons. The sequence is that of Heat-inducible transcription repressor HrcA from Bifidobacterium animalis subsp. lactis (strain AD011).